We begin with the raw amino-acid sequence, 400 residues long: Delta(12) fatty acid desaturase (400 aa).

The helical transmembrane segment at 91 to 111 (LAWPAYWIMQGIVCTGIWVLA) threads the bilayer. The Histidine box-1 signature appears at 112–116 (HECGH). Positions 148 to 152 (HSKHH) match the Histidine box-2 motif. A run of 3 helical transmembrane segments spans residues 199–219 (IVTLFWMVIQFLFGWPAYLIM), 245–265 (FFDIIISDLGVLAALGALIYA), and 277–297 (YYIIPYLFVNFWLVLITFLQH). A Histidine box-3 motif is present at residues 339-343 (HVAHH).

Belongs to the fatty acid desaturase type 1 family.

It localises to the membrane. It carries out the reaction (9Z)-octadecenoyl-CoA + 2 Fe(II)-[cytochrome b5] + O2 + 2 H(+) = (9Z,12Z)-octadecadienoyl-CoA + 2 Fe(III)-[cytochrome b5] + 2 H2O. The catalysed reaction is (9Z)-hexadecenoyl-CoA + 2 Fe(II)-[cytochrome b5] + O2 + 2 H(+) = (9Z,12Z)-hexadecadienoyl-CoA + 2 Fe(III)-[cytochrome b5] + 2 H2O. It functions in the pathway lipid metabolism; polyunsaturated fatty acid biosynthesis. Functionally, catalyzes the desaturation of oleic acid (Delta(9)-18:1) to linoleic acid (Delta(9), Delta(12)-18:2). The sequence is that of Delta(12) fatty acid desaturase from Mortierella isabellina (Filamentous fungus).